The chain runs to 146 residues: Large ribosomal subunit protein eL28 (146 aa).

A disordered region spans residues 123–146 (VRAARKERSSKITFQRKAVRPKRH).

Belongs to the eukaryotic ribosomal protein eL28 family.

The sequence is that of Large ribosomal subunit protein eL28 from Trypanosoma cruzi.